Reading from the N-terminus, the 75-residue chain is Kappa-conotoxin RIIIK (75 aa).

A signal peptide spans 1–19 (MSKLGVLLTICLLLFPLTA). The propeptide occupies 20–50 (LPMDGDQPVDRLAERMQDNISSEQHTFFEKR). 4-hydroxyproline occurs at positions 52, 63, 65, and 71. Intrachain disulfides connect cysteine 54–cysteine 67, cysteine 55–cysteine 72, and cysteine 62–cysteine 73. The residue at position 74 (threonine 74) is a Threonine amide.

Belongs to the conotoxin M superfamily. In terms of tissue distribution, expressed by the venom duct.

Its subcellular location is the secreted. Its function is as follows. Kappa-conotoxins inhibits voltage-gated potassium channels (Kv). This synthetic toxin reversibly inhibits the insect potassium channel Shaker K+, the teleost homolog TSha1 and the mammalian Kv1.2/KCNA2 channel. Interacts with the pore region of the insect channel, in a state-dependent manner. Causes seizure when intracerebrovascularly injected into mice. Is also toxic when intrathecally injected into mice, but shows no visible effects by intraperitoneal injection. Shows protective effects on cardiac tissue when administered after an ischemic event. This Conus radiatus (Rayed cone) protein is Kappa-conotoxin RIIIK.